A 195-amino-acid chain; its full sequence is Protein lin-28 homolog A (195 aa).

Positions 33–106 (QGSGVCKWFN…GLESTRVTGP (74 aa)) constitute a CSD domain. The interval 98 to 126 (LESTRVTGPGGAPCIGSERRPKVKGQQKR) is disordered. A flexible linker region spans residues 107–130 (GGAPCIGSERRPKVKGQQKRRQKG). 2 consecutive CCHC-type zinc fingers follow at residues 131–148 (DRCY…ECKL) and 153–170 (KKCH…QCPA). Residues C133, C136, H141, C146, C155, C158, H163, and C168 each contribute to the Zn(2+) site. The segment at 175–195 (AANLEEQPISEEQELIPETME) is disordered. Acidic residues predominate over residues 182 to 195 (PISEEQELIPETME).

The protein belongs to the lin-28 family. As to quaternary structure, monomer.

Its subcellular location is the cytoplasm. The protein localises to the rough endoplasmic reticulum. It localises to the P-body. It is found in the stress granule. The protein resides in the nucleus. Its subcellular location is the nucleolus. Functionally, RNA-binding protein that inhibits processing of pre-let-7 miRNAs and regulates translation of mRNAs that control developmental timing, pluripotency and metabolism. Seems to recognize a common structural G-quartet (G4) feature in its miRNA and mRNA targets. 'Translational enhancer' that drives specific mRNAs to polysomes and increases the efficiency of protein synthesis. Its association with the translational machinery and target mRNAs results in an increased number of initiation events per molecule of mRNA and, indirectly, in mRNA stabilization. Suppressor of microRNA (miRNA) biogenesis, including that of let-7. Binds specific target miRNA precursors (pre-miRNAs), recognizing an 5'-GGAG-3' motif found in their terminal loop, and recruits uridylyltransferase. This results in the terminal uridylation of target pre-miRNAs. Uridylated pre-miRNAs fail to be processed by Dicer and undergo degradation. Localized to the periendoplasmic reticulum area, binds to a large number of spliced mRNAs and inhibits the translation of mRNAs destined for the ER, reducing the synthesis of transmembrane proteins, ER or Golgi lumen proteins, and secretory proteins. Binds to and enhances the translation of mRNAs for several metabolic enzymes, increasing glycolysis and oxidative phosphorylation. Which, with the let-7 repression may enhance tissue repair in adult tissue. The chain is Protein lin-28 homolog A (lin28a) from Xenopus tropicalis (Western clawed frog).